The sequence spans 37 residues: Large ribosomal subunit protein bL36 (37 aa).

Belongs to the bacterial ribosomal protein bL36 family.

This Borreliella afzelii (strain PKo) (Borrelia afzelii) protein is Large ribosomal subunit protein bL36.